The primary structure comprises 683 residues: Tripartite terminase subunit 3 (683 aa).

A Walker A motif motif is present at residues 217–224 (IPRRHGKT). Residues 312–317 (LLYIDE) carry the Walker B motif motif. Residue Glu317 is the For ATPase activity of the active site. Catalysis depends on for nuclease activity residues Asp472, Glu546, and Asp658.

Belongs to the herpesviridae TRM3 protein family. As to quaternary structure, interacts with the terminase subunits TRM1 and TRM2. Interacts with portal protein.

It localises to the host nucleus. In terms of biological role, component of the molecular motor that translocates viral genomic DNA in empty capsid during DNA packaging. Forms a tripartite terminase complex together with TRM1 and TRM2 in the host cytoplasm. Once the complex reaches the host nucleus, it interacts with the capsid portal vertex. This portal forms a ring in which genomic DNA is translocated into the capsid. TRM3 carries an RNase H-like nuclease activity that plays an important role for the cleavage of concatemeric viral DNA into unit length genomes. The sequence is that of Tripartite terminase subunit 3 from Saimiri sciureus (Common squirrel monkey).